A 639-amino-acid chain; its full sequence is 3D-(3,5/4)-trihydroxycyclohexane-1,2-dione hydrolase (639 aa).

Thiamine diphosphate is bound at residue glutamate 65. Residues 437–517 (SLPGDLQRMW…INIILFDNSG (81 aa)) form a thiamine pyrophosphate binding region. Mg(2+) is bound by residues aspartate 488 and asparagine 515.

This sequence belongs to the TPP enzyme family. Mg(2+) serves as cofactor. It depends on thiamine diphosphate as a cofactor.

It carries out the reaction 3D-3,5/4-trihydroxycyclohexane-1,2-dione + H2O = 5-deoxy-D-glucuronate + H(+). It participates in polyol metabolism; myo-inositol degradation into acetyl-CoA; acetyl-CoA from myo-inositol: step 3/7. Its function is as follows. Involved in the cleavage of the C1-C2 bond of 3D-(3,5/4)-trihydroxycyclohexane-1,2-dione (THcHDO) to yield 5-deoxy-glucuronate (5DG). In Geobacillus thermodenitrificans (strain NG80-2), this protein is 3D-(3,5/4)-trihydroxycyclohexane-1,2-dione hydrolase.